The following is a 209-amino-acid chain: Thymidylate kinase (209 aa).

Residue 10 to 17 (GLDGAGKS) coordinates ATP.

This sequence belongs to the thymidylate kinase family.

The enzyme catalyses dTMP + ATP = dTDP + ADP. Functionally, phosphorylation of dTMP to form dTDP in both de novo and salvage pathways of dTTP synthesis. The sequence is that of Thymidylate kinase from Francisella tularensis subsp. holarctica (strain OSU18).